Consider the following 384-residue polypeptide: MAP kinase-activated protein kinase 3 (384 aa).

Met1 is subject to N-acetylmethionine. Positions 1-33 are disordered; that stretch reads MDGETAGEKGSLVPQPGALGAPALGGAPAPGVR. Low complexity predominate over residues 14-31; it reads PQPGALGAPALGGAPAPG. A Protein kinase domain is found at 46–306; it reads QLSKQVLGLG…IMQFMNHPWI (261 aa). Residues 52 to 60 and Lys75 each bind ATP; that span reads LGLGVNGKV. Asp168 (proton acceptor) is an active-site residue. At Thr203 the chain carries Phosphothreonine; by MAPK14. Ser253 carries the phosphoserine; by MAPK14 modification. Ser309 carries the post-translational modification Phosphoserine; by autocatalysis. An autoinhibitory helix region spans residues 309–345; that stretch reads SMEVPQTPLHTARVLEEDKDHWDDVKEEMTSALATMR. Residue Thr315 is modified to Phosphothreonine; by MAPK14. The Nuclear export signal (NES) signature appears at 337-346; sequence MTSALATMRV. The p38 MAPK-binding site stretch occupies residues 347–371; sequence DYDQVKIKDLKTSNNRLLNKRRKKQ. Short sequence motifs (bipartite nuclear localization signal) lie at residues 352 to 355 and 366 to 370; these read KIKD and KRRKK. Residues 359 to 384 form a disordered region; sequence SNNRLLNKRRKKQGGSSSASPGCNNQ. A compositionally biased stretch (polar residues) spans 372-384; it reads GGSSSASPGCNNQ.

Belongs to the protein kinase superfamily. CAMK Ser/Thr protein kinase family. In terms of assembly, heterodimer with p38-alpha/MAPK14. The heterodimer with p38-alpha/MAPK14 forms a stable complex: molecules are positioned 'face to face' so that the ATP-binding sites of both kinases are at the heterodimer interface. Interacts with TCF3 and with polycomb proteins, such as PCH2 and BMI1/PCGF4. Phosphorylated and activated by MAPK1/ERK2 and MAPK3/ERK1. Phosphorylated and activated by MAP kinase p38-alpha/MAPK14 at Thr-203, Ser-253 and Thr-315.

Its subcellular location is the nucleus. It is found in the cytoplasm. It carries out the reaction L-seryl-[protein] + ATP = O-phospho-L-seryl-[protein] + ADP + H(+). It catalyses the reaction L-threonyl-[protein] + ATP = O-phospho-L-threonyl-[protein] + ADP + H(+). Activated following phosphorylation by p38-alpha/MAPK14 following various stresses. Inhibited by ligand 5B (2'-[2-(1,3-benzodioxol-5-yl)pyrimidin-4-yl]-5',6'-dihydrospiro[piperidine-4,7'-pyrrolo[3,2-c]pyridin]- 4'(1'h)-one) and ligand P4O (2-[2-(2-fluorophenyl)pyridin-4-yl]-1,5,6,7-tetrahydro- 4h-pyrrolo[3,2-c]pyridin-4-one), 2 ATP-competitive inhibitors. Functionally, stress-activated serine/threonine-protein kinase involved in cytokines production, endocytosis, cell migration, chromatin remodeling and transcriptional regulation. Following stress, it is phosphorylated and activated by MAP kinase p38-alpha/MAPK14, leading to phosphorylation of substrates. Phosphorylates serine in the peptide sequence, Hyd-X-R-X(2)-S, where Hyd is a large hydrophobic residue. MAPKAPK2 and MAPKAPK3, share the same function and substrate specificity, but MAPKAPK3 kinase activity and level in protein expression are lower compared to MAPKAPK2. Phosphorylates HSP27/HSPB1, KRT18, KRT20, RCSD1, RPS6KA3, TAB3 and TTP/ZFP36. Mediates phosphorylation of HSP27/HSPB1 in response to stress, leading to dissociate HSP27/HSPB1 from large small heat-shock protein (sHsps) oligomers and impair their chaperone activities and ability to protect against oxidative stress effectively. Involved in inflammatory response by regulating tumor necrosis factor (TNF) and IL6 production post-transcriptionally: acts by phosphorylating AU-rich elements (AREs)-binding proteins, such as TTP/ZFP36, leading to regulate the stability and translation of TNF and IL6 mRNAs. Phosphorylation of TTP/ZFP36, a major post-transcriptional regulator of TNF, promotes its binding to 14-3-3 proteins and reduces its ARE mRNA affinity leading to inhibition of dependent degradation of ARE-containing transcript. Involved in toll-like receptor signaling pathway (TLR) in dendritic cells: required for acute TLR-induced macropinocytosis by phosphorylating and activating RPS6KA3. Also acts as a modulator of Polycomb-mediated repression. The sequence is that of MAP kinase-activated protein kinase 3 (Mapkapk3) from Rattus norvegicus (Rat).